The following is a 21-amino-acid chain: Large ribosomal subunit protein uL29 (21 aa).

Belongs to the universal ribosomal protein uL29 family.

This Brevundimonas diminuta (Pseudomonas diminuta) protein is Large ribosomal subunit protein uL29 (rpmC).